Consider the following 215-residue polypeptide: MNAPAPSSARRTKKLPPLRVGIGGPVGSGKTTLLEMLCKAMRDRYDLVAITNDIYTKEDQRLLTVAGALPEERIMGVETGGCPHTAIREDASINLEAVDRMLSRFPDADIVFIESGGDNLAATFSPELSDLTIYVIDVAGGEKIPRKGGPGITKSDLLVINKTDLAPLVGANLDVMASDTKKMRGERPYVMTNLKALEGVADVIAFIEKKGLLTV.

Residues Met1–Gly21 form a disordered region. Residue Gly24 to Thr31 participates in GTP binding.

The protein belongs to the SIMIBI class G3E GTPase family. UreG subfamily. Homodimer. UreD, UreF and UreG form a complex that acts as a GTP-hydrolysis-dependent molecular chaperone, activating the urease apoprotein by helping to assemble the nickel containing metallocenter of UreC. The UreE protein probably delivers the nickel.

It is found in the cytoplasm. Functionally, facilitates the functional incorporation of the urease nickel metallocenter. This process requires GTP hydrolysis, probably effectuated by UreG. In Burkholderia lata (strain ATCC 17760 / DSM 23089 / LMG 22485 / NCIMB 9086 / R18194 / 383), this protein is Urease accessory protein UreG.